Consider the following 219-residue polypeptide: Peptide methionine sulfoxide reductase MsrA (219 aa).

The interval 1 to 20 (MGLFRSPRQNLPTAADALPG) is disordered. Cys-55 is a catalytic residue.

It belongs to the MsrA Met sulfoxide reductase family.

It catalyses the reaction L-methionyl-[protein] + [thioredoxin]-disulfide + H2O = L-methionyl-(S)-S-oxide-[protein] + [thioredoxin]-dithiol. It carries out the reaction [thioredoxin]-disulfide + L-methionine + H2O = L-methionine (S)-S-oxide + [thioredoxin]-dithiol. Has an important function as a repair enzyme for proteins that have been inactivated by oxidation. Catalyzes the reversible oxidation-reduction of methionine sulfoxide in proteins to methionine. This is Peptide methionine sulfoxide reductase MsrA from Rhodospirillum centenum (strain ATCC 51521 / SW).